The primary structure comprises 457 residues: Multidrug resistance protein MdtK (457 aa).

A run of 12 helical transmembrane segments spans residues L11–V31, I53–A73, W93–I113, A127–L147, G160–Y180, L188–M208, I239–V259, A277–I297, R316–L336, L357–V377, I387–A407, and P418–L438.

The protein belongs to the multi antimicrobial extrusion (MATE) (TC 2.A.66.1) family. MdtK subfamily.

It is found in the cell inner membrane. Functionally, multidrug efflux pump that functions probably as a Na(+)/drug antiporter. The chain is Multidrug resistance protein MdtK from Edwardsiella ictaluri (strain 93-146).